Consider the following 334-residue polypeptide: Phosphoribosylformylglycinamidine cyclo-ligase (334 aa).

It belongs to the AIR synthase family.

The protein localises to the cytoplasm. It catalyses the reaction 2-formamido-N(1)-(5-O-phospho-beta-D-ribosyl)acetamidine + ATP = 5-amino-1-(5-phospho-beta-D-ribosyl)imidazole + ADP + phosphate + H(+). It participates in purine metabolism; IMP biosynthesis via de novo pathway; 5-amino-1-(5-phospho-D-ribosyl)imidazole from N(2)-formyl-N(1)-(5-phospho-D-ribosyl)glycinamide: step 2/2. This is Phosphoribosylformylglycinamidine cyclo-ligase from Pyrococcus furiosus (strain ATCC 43587 / DSM 3638 / JCM 8422 / Vc1).